The chain runs to 243 residues: Adenosylcobinamide-GDP ribazoletransferase (243 aa).

5 helical membrane-spanning segments follow: residues 31-51, 55-75, 109-129, 135-155, and 188-208; these read LLFY…FNAL, APLL…SGGL, IAVV…VALI, IGLL…FLGT, and VVLA…CFYW.

The protein belongs to the CobS family. Mg(2+) is required as a cofactor.

The protein resides in the cell inner membrane. It catalyses the reaction alpha-ribazole + adenosylcob(III)inamide-GDP = adenosylcob(III)alamin + GMP + H(+). It carries out the reaction alpha-ribazole 5'-phosphate + adenosylcob(III)inamide-GDP = adenosylcob(III)alamin 5'-phosphate + GMP + H(+). It participates in cofactor biosynthesis; adenosylcobalamin biosynthesis; adenosylcobalamin from cob(II)yrinate a,c-diamide: step 7/7. In terms of biological role, joins adenosylcobinamide-GDP and alpha-ribazole to generate adenosylcobalamin (Ado-cobalamin). Also synthesizes adenosylcobalamin 5'-phosphate from adenosylcobinamide-GDP and alpha-ribazole 5'-phosphate. The sequence is that of Adenosylcobinamide-GDP ribazoletransferase from Pseudomonas syringae pv. tomato (strain ATCC BAA-871 / DC3000).